Consider the following 527-residue polypeptide: EGF domain-specific O-linked N-acetylglucosamine transferase (527 aa).

The N-terminal stretch at 1–19 (MLMLLVFGVLLHEVPLSGQ) is a signal peptide. Residues 295–297 (DYD) carry the Required for optimal activity motif. Asparagine 354 carries N-linked (GlcNAc...) asparagine glycosylation. The short motif at 524-527 (HDEL) is the Prevents secretion from ER element.

The protein belongs to the glycosyltransferase 61 family. As to expression, widely expressed. Expressed in brain, heart, kidney, lung, skeletal muscles and thymus. Highest expression is observed in lung and the lowest in skeletal muscles.

The protein localises to the endoplasmic reticulum lumen. It catalyses the reaction L-seryl-[protein] + UDP-N-acetyl-alpha-D-glucosamine = 3-O-(N-acetyl-beta-D-glucosaminyl)-L-seryl-[protein] + UDP + H(+). The enzyme catalyses L-threonyl-[protein] + UDP-N-acetyl-alpha-D-glucosamine = 3-O-(N-acetyl-beta-D-glucosaminyl)-L-threonyl-[protein] + UDP + H(+). Catalyzes the transfer of a single N-acetylglucosamine from UDP-GlcNAc to a serine or threonine residue in extracellular proteins resulting in their modification with a beta-linked N-acetylglucosamine (O-GlcNAc). Specifically glycosylates the Thr residue located between the fifth and sixth conserved cysteines of folded EGF-like domains. The polypeptide is EGF domain-specific O-linked N-acetylglucosamine transferase (Eogt) (Mus musculus (Mouse)).